The sequence spans 484 residues: MDYFKTSIDQLHEQLRSGKVTSSQLVDETLAGINQLDAEVDAFLALNADGAKEKAAAVDAAGIADDQPLAGVPIAIKDNIVTKGVVTTAASKMLANFNPIYDATVMQKLDAAGAINVGKTNMDEFAMGSSTENSAFKTTKNAWDHTRVPGGSSGGSAAAVAAGEVIAALGSDTGGSIRQPAAFNGIVGVKPTYGRVSRWGLIAFSSSLDQIGTLTRHVKDAAQLLNVIAGHDERDSTTADTPVPDFTAKIGQDIKGMKIALPKEYLGKGVDPAVADKIKAAAKQFEDMGATVTEVSLPHTQYAVPSYYIIASSEASSNLQRFDGIRYGFRAKDVKNIEDVYVRSRSEGFGPEVKRRIMLGTFSLSAGFYDAYFKKAGQVRTLITRDFEDVFKDYDLIIGPTTPTVAFKIGEKVTDPVTMYMNDILTIPVNLAGLPAASVPAGFVDGMPVGLQLIGKHFDESTIFQVAAAFEAQNDYLAQIPGGK.

Catalysis depends on charge relay system residues Lys77 and Ser152. Catalysis depends on Ser176, which acts as the Acyl-ester intermediate.

Belongs to the amidase family. GatA subfamily. Heterotrimer of A, B and C subunits.

The catalysed reaction is L-glutamyl-tRNA(Gln) + L-glutamine + ATP + H2O = L-glutaminyl-tRNA(Gln) + L-glutamate + ADP + phosphate + H(+). Its function is as follows. Allows the formation of correctly charged Gln-tRNA(Gln) through the transamidation of misacylated Glu-tRNA(Gln) in organisms which lack glutaminyl-tRNA synthetase. The reaction takes place in the presence of glutamine and ATP through an activated gamma-phospho-Glu-tRNA(Gln). In Lacticaseibacillus casei (strain BL23) (Lactobacillus casei), this protein is Glutamyl-tRNA(Gln) amidotransferase subunit A.